The chain runs to 147 residues: Protein SOB FIVE-LIKE 2 (147 aa).

Residues 18-23 (SGWTMY) carry the SOFL-A motif. Residues 32 to 147 (HHSEVVYEEE…ASRVKVSKTK (116 aa)) form a disordered region. Residues 37–77 (VYEEEDDGFSVKEVDDDGDGDEDDDDDDDDDSSNNESDDSM) show a composition bias toward acidic residues. The SOFL-B motif lies at 76–85 (SMTSDASSWP). Polar residues predominate over residues 78–93 (TSDASSWPSTHQPPRS). A compositionally biased stretch (low complexity) spans 96–106 (NHAAAKNSNAK). Residues 114–131 (NRVRDRFSDEGEESELKA) are compositionally biased toward basic and acidic residues.

This sequence belongs to the SOFL plant protein family. As to expression, predominantly expressed in the vascular tissues of seedlings, developing leaves, flowers and siliques, but barely detectable in roots and stems.

Its subcellular location is the cytoplasm. It localises to the nucleus. Functionally, involved in cytokinin-mediated development. Together with SOFL2, triggers the endogenous content of specific bioactive cytokinins derived from the biosynthetic intermediates trans-zeatin riboside monophosphate (tZRMP) and N(6)-(Delta(2)-isopentenyl)adenosine monophosphate (iPRMP) such as N-glucosides trans-zeatin 7-glucoside (tZ7G), cis-zeatin 7-glucoside (cZ7G) and N(6)-(Delta(2)-isopentenyl)adenine 7-glucoside (iP7G). The polypeptide is Protein SOB FIVE-LIKE 2 (Arabidopsis thaliana (Mouse-ear cress)).